The sequence spans 224 residues: Rhodanese-like domain-containing protein 14, chloroplastic (224 aa).

The transit peptide at methionine 1–cysteine 48 directs the protein to the chloroplast. Positions lysine 87–threonine 220 constitute a Rhodanese domain. Catalysis depends on cysteine 166, which acts as the Cysteine persulfide intermediate.

The protein resides in the plastid. It localises to the chloroplast. The polypeptide is Rhodanese-like domain-containing protein 14, chloroplastic (Arabidopsis thaliana (Mouse-ear cress)).